A 728-amino-acid chain; its full sequence is MWVTKLLPALLLQHVLLHLLLLPIAIPYAEGQRKRRNTIHEFKKSAKTTLIKIDPALKIKTKKVNTADQCANRCTRNKGLPFTCKAFVFDKARKQCLWFPFNSMSSGVKKEFGHEFDLYENKDYIRNCIIGKGRSYKGTVSITKSGIKCQPWSSMIPHEHSFLPSSYRGKDLQENYCRNPRGEEGGPWCFTSNPEVRYEVCDIPQCSEVECMTCNGESYRGLMDHTESGKICQRWDHQTPHRHKFLPERYPDKGFDDNYCRNPDGQPRPWCYTLDPHTRWEYCAIKTCADNTMNDTDVPLETTECIQGQGEGYRGTVNTIWNGIPCQRWDSQYPHEHDMTPENFKCKDLRENYCRNPDGSESPWCFTTDPNIRVGYCSQIPNCDMSHGQDCYRGNGKNYMGNLSQTRSGLTCSMWDKNMEDLHRHIFWEPDASKLNENYCRNPDDDAHGPWCYTGNPLIPWDYCPISRCEGDTTPTIVNLDHPVISCAKTKQLRVVNGIPTRTNIGWMVSLRYRNKHICGGSLIKESWVLTARQCFPSRDLKDYEAWLGIHDVHGRGDEKCKQVLNVSQLVYGPEGSDLVLMKLARPAVLDDFVSTIDLPNYGCTIPEKTSCSVYGWGYTGLINYDGLLRVAHLYIMGNEKCSQHHRGKVTLNESEICAGAEKIGSGPCEGDYGGPLVCEQHKMRMVLGVIVPGRGCAIPNRPGIFVRVAYYAKWIHKIILTYKVPQS.

Residues 1–31 (MWVTKLLPALLLQHVLLHLLLLPIAIPYAEG) form the signal peptide. Position 32 is a pyrrolidone carboxylic acid (glutamine 32). One can recognise a PAN domain in the interval 37-123 (NTIHEFKKSA…HEFDLYENKD (87 aa)). 8 disulfide bridges follow: cysteine 70-cysteine 96, cysteine 74-cysteine 84, cysteine 128-cysteine 206, cysteine 149-cysteine 189, cysteine 177-cysteine 201, cysteine 211-cysteine 288, cysteine 232-cysteine 271, and cysteine 260-cysteine 283. 2 Kringle domains span residues 128–206 (CIIG…IPQC) and 211–288 (CMTC…IKTC). Asparagine 294 carries an N-linked (GlcNAc...) (complex) asparagine glycan. 6 disulfides stabilise this stretch: cysteine 305–cysteine 383, cysteine 326–cysteine 365, cysteine 354–cysteine 377, cysteine 391–cysteine 469, cysteine 412–cysteine 452, and cysteine 440–cysteine 464. 2 Kringle domains span residues 305–383 (CIQG…IPNC) and 391–469 (CYRG…ISRC). Asparagine 402 carries an N-linked (GlcNAc...) (complex) asparagine glycan. Residue threonine 476 is glycosylated (O-linked (GalNAc...) threonine). 5 disulfide bridges follow: cysteine 487–cysteine 604, cysteine 519–cysteine 535, cysteine 612–cysteine 679, cysteine 642–cysteine 658, and cysteine 669–cysteine 697. The Peptidase S1 domain occupies 495 to 721 (VVNGIPTRTN…YAKWIHKIIL (227 aa)). 2 N-linked (GlcNAc...) (complex) asparagine glycosylation sites follow: asparagine 566 and asparagine 653.

It belongs to the peptidase S1 family. Plasminogen subfamily. As to quaternary structure, dimer of an alpha chain and a beta chain linked by a disulfide bond. Interacts with SRPX2; the interaction increases HGF mitogenic activity. The single-chain precursor undergoes proteolytic processing by TMPRSS13 resulting in an active two-chain form. The single-chain precursor undergoes proteolytic processing by HGFAC resulting in an active two-chain form.

Its function is as follows. Potent mitogen for mature parenchymal hepatocyte cells, seems to be a hepatotrophic factor, and acts as a growth factor for a broad spectrum of tissues and cell types. Activating ligand for the receptor tyrosine kinase MET by binding to it and promoting its dimerization. Activates MAPK signaling following TMPRSS13 cleavage and activation. This Homo sapiens (Human) protein is Hepatocyte growth factor (HGF).